A 124-amino-acid chain; its full sequence is UPF0375 protein Y45F10C.4 (124 aa).

Residues 1–23 (MNFLPSTVLLLSFVVAIISGSFS) form the signal peptide. 2 N-linked (GlcNAc...) asparagine glycosylation sites follow: asparagine 36 and asparagine 62.

The protein belongs to the UPF0375 family.

The protein localises to the secreted. This is UPF0375 protein Y45F10C.4 from Caenorhabditis elegans.